We begin with the raw amino-acid sequence, 133 residues long: ATP synthase epsilon chain, chloroplastic (133 aa).

Belongs to the ATPase epsilon chain family. As to quaternary structure, F-type ATPases have 2 components, CF(1) - the catalytic core - and CF(0) - the membrane proton channel. CF(1) has five subunits: alpha(3), beta(3), gamma(1), delta(1), epsilon(1). CF(0) has three main subunits: a, b and c.

The protein resides in the plastid. Its subcellular location is the chloroplast thylakoid membrane. Produces ATP from ADP in the presence of a proton gradient across the membrane. The sequence is that of ATP synthase epsilon chain, chloroplastic from Mesostigma viride (Green alga).